Reading from the N-terminus, the 517-residue chain is B3 domain-containing protein REM1 (517 aa).

A DNA-binding region (TF-B3 1) is located at residues phenylalanine 7–serine 92. Residues aspartate 115–isoleucine 140 show a composition bias toward acidic residues. The segment at aspartate 115–aspartate 158 is disordered. The segment covering isoleucine 143–serine 157 has biased composition (basic and acidic residues). 2 consecutive DNA-binding regions (TF-B3) follow at residues phenylalanine 162 to glutamate 259 and phenylalanine 285 to lysine 385. Residues glycine 393–lysine 415 form a disordered region.

In terms of tissue distribution, expressed in the shoot apical meristem (SAM), in the inflorescence apex and flowers.

It localises to the nucleus. May play a role in flower development. This is B3 domain-containing protein REM1 (REM1) from Arabidopsis thaliana (Mouse-ear cress).